Consider the following 26-residue polypeptide: Delta-conotoxin Am2766 (26 aa).

3 cysteine pairs are disulfide-bonded: Cys1-Cys16, Cys8-Cys20, and Cys15-Cys24. Glu26 carries the glutamic acid 1-amide modification.

Expressed by the venom duct.

Its subcellular location is the secreted. Functionally, delta-conotoxins bind to site 6 of voltage-gated sodium channels (Nav) and inhibit the inactivation process. The chain is Delta-conotoxin Am2766 from Conus amadis (Amadis cone).